The chain runs to 211 residues: Putative ankyrin repeat protein R810 (211 aa).

5 ANK repeats span residues 31–61 (TKFI…NLKY), 72–101 (NIND…DICA), 103–131 (QNSP…KFFG), 133–162 (YSSA…FCLE), and 163–191 (MEIA…SYFD).

This Acanthamoeba polyphaga mimivirus (APMV) protein is Putative ankyrin repeat protein R810.